A 252-amino-acid polypeptide reads, in one-letter code: Major prion protein (252 aa).

An N-terminal signal peptide occupies residues 1-22 (MANLGYWMLVLFVATWSDLGLC). The segment at 23–229 (KKRPKPGGWN…ESQAYYQRGS (207 aa)) is interaction with GRB2, ERI3 and SYN1. Residues 26–104 (PKPGGWNTGG…HNQWNKPSKP (79 aa)) form a disordered region. 5 consecutive repeat copies span residues 51–58 (PQGGGWGQ), 59–66 (PHGGGWGQ), 67–74 (PHGGGWGQ), 75–82 (PHGGGWGQ), and 83–90 (PHGGGWGQ). The tract at residues 51–90 (PQGGGWGQPHGGGWGQPHGGGWGQPHGGGWGQPHGGGWGQ) is 5 X 8 AA tandem repeats of P-H-G-G-G-W-G-Q. A compositionally biased stretch (gly residues) spans 52 to 92 (QGGGWGQPHGGGWGQPHGGGWGQPHGGGWGQPHGGGWGQAG). 12 residues coordinate Cu(2+): His-60, Gly-61, Gly-62, His-68, Gly-69, Gly-70, His-76, Gly-77, Gly-78, His-84, Gly-85, and Gly-86. A disulfide bond links Cys-178 and Cys-213. Asn-180 and Asn-196 each carry an N-linked (GlcNAc...) asparagine glycan. The GPI-anchor amidated serine moiety is linked to residue Ser-229. A propeptide spans 230–252 (SMVLFSSPPVILLISFLIFLIVG) (removed in mature form).

This sequence belongs to the prion family. In terms of assembly, monomer and homodimer. Has a tendency to aggregate into amyloid fibrils containing a cross-beta spine, formed by a steric zipper of superposed beta-strands. Soluble oligomers may represent an intermediate stage on the path to fibril formation. Copper binding may promote oligomerization. Interacts with GRB2, APP, ERI3/PRNPIP and SYN1. Mislocalized cytosolically exposed PrP interacts with MGRN1; this interaction alters MGRN1 subcellular location and causes lysosomal enlargement. Interacts with KIAA1191.

It is found in the cell membrane. Its subcellular location is the golgi apparatus. Its primary physiological function is unclear. Has cytoprotective activity against internal or environmental stresses. May play a role in neuronal development and synaptic plasticity. May be required for neuronal myelin sheath maintenance. May play a role in iron uptake and iron homeostasis. Soluble oligomers are toxic to cultured neuroblastoma cells and induce apoptosis (in vitro). Association with GPC1 (via its heparan sulfate chains) targets PRNP to lipid rafts. Also provides Cu(2+) or Zn(2+) for the ascorbate-mediated GPC1 deaminase degradation of its heparan sulfate side chains. This chain is Major prion protein (PRNP), found in Ateles paniscus (Black spider monkey).